The chain runs to 30 residues: MIYDSQIYTVLCIALLAGILAIRLGSTLYE.

A helical membrane pass occupies residues 7–29 (IYTVLCIALLAGILAIRLGSTLY).

It belongs to the PsaM family.

It localises to the plastid. It is found in the chloroplast thylakoid membrane. In Phaeodactylum tricornutum (strain CCAP 1055/1), this protein is Photosystem I reaction center subunit XII.